A 177-amino-acid polypeptide reads, in one-letter code: Phycoerythrin beta subunit (177 aa).

Y18, K28, N35, and D39 together coordinate (2R,3E)-phycocyanobilin. Residues C50, D54, and C61 each coordinate 15,16-dihydrobiliverdin. The (2R,3E)-phycocyanobilin site is built by R77, C82, R84, and D85. 15,16-dihydrobiliverdin-binding residues include R129, Q148, and K149. The (2R,3E)-phycocyanobilin site is built by P154, G156, and C158.

This sequence belongs to the phycobiliprotein family. Heterotetramer of 2 identical alpha chains and 2 identical beta chains which form 2 alpha-beta heterodimers within the heterotetramer. The two alpha-beta heterodimers are rotated to an open configuration in contrast to the closed configuration found in other cryptophyte species due to the insertion of a single amino acid, 'Asp-65', in a conserved region of the alpha chain. In the open form, the central chromophores are not in physical contact but are separated by a water-filled channel. In terms of processing, contains three phycocyanobilin chromophores and one 15,16-dihydrobiliverdin chromophore with binding of the phycocyanobilin chromophores mediated by both the alpha and beta subunits.

The protein localises to the plastid. It localises to the chloroplast thylakoid membrane. Light-harvesting photosynthetic bile pigment-protein from the phycobiliprotein complex. This Hemiselmis virescens protein is Phycoerythrin beta subunit.